A 266-amino-acid chain; its full sequence is Chymotrypsin-like elastase family member 1 (266 aa).

The signal sequence occupies residues 1 to 16 (MLRFLVLATLVLYGHS). The propeptide at 17-26 (TRDFPETNAR) is activation peptide. A Peptidase S1 domain is found at 27 to 264 (VVGGTEARKN…YISWINNVIA (238 aa)). A disulfide bridge connects residues C56 and C72. The Charge relay system role is filled by H71. Positions 85, 87, 90, and 95 each coordinate Ca(2+). A glycan (N-linked (GlcNAc...) asparagine) is linked at N87. D119 serves as the catalytic Charge relay system. Disulfide bonds link C153/C220, C184/C200, and C210/C240. The active-site Charge relay system is the S214. N-linked (GlcNAc...) asparagine glycosylation is present at N241.

Belongs to the peptidase S1 family. Elastase subfamily. Requires Ca(2+) as cofactor.

The protein resides in the secreted. The catalysed reaction is Hydrolysis of proteins, including elastin. Preferential cleavage: Ala-|-Xaa.. Functionally, serine proteases that hydrolyze many proteins in addition to elastin. This Felis catus (Cat) protein is Chymotrypsin-like elastase family member 1 (CELA1).